We begin with the raw amino-acid sequence, 85 residues long: Large ribosomal subunit protein bL27 (85 aa).

The tract at residues 1 to 20 is disordered; the sequence is MAHKKAGGSTRNGRDSEAKR.

The protein belongs to the bacterial ribosomal protein bL27 family.

This Citrobacter koseri (strain ATCC BAA-895 / CDC 4225-83 / SGSC4696) protein is Large ribosomal subunit protein bL27.